A 643-amino-acid chain; its full sequence is Very long-chain fatty acid transport protein (643 aa).

The Cytoplasmic segment spans residues 1–15 (MACMHQAQLYNDLEE). A helical transmembrane segment spans residues 16 to 36 (LLTGPSVPIVAGAAGAAALTA). Over 37–138 (YINAKYHIAH…AIDGGNSAEH (102 aa)) the chain is Extracellular. The helical transmembrane segment at 139 to 159 (LMLWLALDAIGAATSFLNWNL) threads the bilayer. At 160–249 (TGAGLIHCIK…TGLPKGVFIS (90 aa)) the chain is on the cytoplasmic side. 235-246 (YTSGTTGLPKGV) contributes to the ATP binding site. Residues 250–318 (TGRELRTDWS…FWPEVVASEA (69 aa)) lie within the membrane without spanning it. Residues 319–643 (NIIQYVGELG…QGIVDKRIRL (325 aa)) are Cytoplasmic-facing. Positions 477–525 (DLWFKSGDMLRQDAEGRVYFVDRLGDTFRWKSENVSTNEVADVMGTFPQ) match the FACS motif.

This sequence belongs to the ATP-dependent AMP-binding enzyme family.

Its subcellular location is the lipid droplet. It localises to the cell membrane. The protein resides in the peroxisome membrane. The protein localises to the peroxisome. The catalysed reaction is a very long-chain fatty acid + ATP + CoA = a very long-chain fatty acyl-CoA + AMP + diphosphate. Its function is as follows. Acyl-CoA synthetase required for both the import of long chain fatty acids (LCFAs) (C14-C18) and the activation very long chain fatty acids (VLCFAs) (C20-C26) by esterification of the fatty acids into metabolically active CoA-thioesters for subsequent degradation or incorporation into phospholipids. The transport and fatty acyl-CoA synthetase activities are genetically separable and are thus independent activities. Esterifies VLCFAs in the peroxisome matrix. The VLCFAs are actively transported into peroxisomes by a PXA1-PXA2 heterodimeric transporter in the peroxisomal membrane. The polypeptide is Very long-chain fatty acid transport protein (FAT1) (Cochliobolus heterostrophus (Southern corn leaf blight fungus)).